A 249-amino-acid chain; its full sequence is UPF0246 protein EUBREC_1226 (249 aa).

The protein belongs to the UPF0246 family.

The protein is UPF0246 protein EUBREC_1226 of Agathobacter rectalis (strain ATCC 33656 / DSM 3377 / JCM 17463 / KCTC 5835 / VPI 0990) (Eubacterium rectale).